Reading from the N-terminus, the 426-residue chain is 3-phosphoshikimate 1-carboxyvinyltransferase (426 aa).

The 3-phosphoshikimate site is built by Lys22, Ser23, and Arg27. A phosphoenolpyruvate-binding site is contributed by Lys22. 2 residues coordinate phosphoenolpyruvate: Gly96 and Arg124. 7 residues coordinate 3-phosphoshikimate: Ser170, Ser171, Gln172, Ser198, Asp314, Asn337, and Lys341. Gln172 contacts phosphoenolpyruvate. The active-site Proton acceptor is the Asp314. Phosphoenolpyruvate is bound by residues Arg345, Arg387, and Lys412.

Belongs to the EPSP synthase family. Monomer.

The protein localises to the cytoplasm. It catalyses the reaction 3-phosphoshikimate + phosphoenolpyruvate = 5-O-(1-carboxyvinyl)-3-phosphoshikimate + phosphate. It participates in metabolic intermediate biosynthesis; chorismate biosynthesis; chorismate from D-erythrose 4-phosphate and phosphoenolpyruvate: step 6/7. Catalyzes the transfer of the enolpyruvyl moiety of phosphoenolpyruvate (PEP) to the 5-hydroxyl of shikimate-3-phosphate (S3P) to produce enolpyruvyl shikimate-3-phosphate and inorganic phosphate. In Photobacterium damsela subsp. piscicida (Pasteurella piscicida), this protein is 3-phosphoshikimate 1-carboxyvinyltransferase.